The primary structure comprises 395 residues: Syncephapepsin (395 aa).

Residues 1–19 (MKFSLALLATVALATISQA) form the signal peptide. The propeptide at 20-71 (APVEKQVAGKPFQLVKNPHYQANATRAIFRAEKKYARHTAIPEQGKTIVKSA) is activation peptide. Residues 89–391 (YYATVSVGTP…NQGVPEVQIA (303 aa)) form the Peptidase A1 domain. Asp-107 is a catalytic residue. Cys-120 and Cys-123 are joined by a disulfide. Asp-288 is a catalytic residue. Cys-322 and Cys-355 are joined by a disulfide.

This sequence belongs to the peptidase A1 family. Monomer.

Functionally, hydrolysis of proteins with a broad specificity. Residues recognized to be cleaved were primarily those of trypsin and chymotrypsin and Lys was the most susceptible. The chain is Syncephapepsin (SPSR) from Syncephalastrum racemosum (Filamentous fungus).